Here is a 134-residue protein sequence, read N- to C-terminus: Ribonuclease P protein component (134 aa).

This sequence belongs to the RnpA family. Consists of a catalytic RNA component (M1 or rnpB) and a protein subunit.

It catalyses the reaction Endonucleolytic cleavage of RNA, removing 5'-extranucleotides from tRNA precursor.. Its function is as follows. RNaseP catalyzes the removal of the 5'-leader sequence from pre-tRNA to produce the mature 5'-terminus. It can also cleave other RNA substrates such as 4.5S RNA. The protein component plays an auxiliary but essential role in vivo by binding to the 5'-leader sequence and broadening the substrate specificity of the ribozyme. The sequence is that of Ribonuclease P protein component from Pseudomonas putida (strain GB-1).